Consider the following 108-residue polypeptide: Pyrimidine/purine nucleoside phosphorylase (108 aa).

This sequence belongs to the nucleoside phosphorylase PpnP family.

The catalysed reaction is a purine D-ribonucleoside + phosphate = a purine nucleobase + alpha-D-ribose 1-phosphate. It carries out the reaction adenosine + phosphate = alpha-D-ribose 1-phosphate + adenine. It catalyses the reaction cytidine + phosphate = cytosine + alpha-D-ribose 1-phosphate. The enzyme catalyses guanosine + phosphate = alpha-D-ribose 1-phosphate + guanine. The catalysed reaction is inosine + phosphate = alpha-D-ribose 1-phosphate + hypoxanthine. It carries out the reaction thymidine + phosphate = 2-deoxy-alpha-D-ribose 1-phosphate + thymine. It catalyses the reaction uridine + phosphate = alpha-D-ribose 1-phosphate + uracil. The enzyme catalyses xanthosine + phosphate = alpha-D-ribose 1-phosphate + xanthine. Functionally, catalyzes the phosphorolysis of diverse nucleosides, yielding D-ribose 1-phosphate and the respective free bases. Can use uridine, adenosine, guanosine, cytidine, thymidine, inosine and xanthosine as substrates. Also catalyzes the reverse reactions. The protein is Pyrimidine/purine nucleoside phosphorylase of Polaromonas sp. (strain JS666 / ATCC BAA-500).